The following is a 146-amino-acid chain: Ribosome-binding factor A (146 aa).

The tract at residues 121–146 (KQQQFGSADDVTENDIDEADDTEGKA) is disordered. Residues 130-146 (DVTENDIDEADDTEGKA) show a composition bias toward acidic residues.

This sequence belongs to the RbfA family. As to quaternary structure, monomer. Binds 30S ribosomal subunits, but not 50S ribosomal subunits or 70S ribosomes.

It is found in the cytoplasm. In terms of biological role, one of several proteins that assist in the late maturation steps of the functional core of the 30S ribosomal subunit. Associates with free 30S ribosomal subunits (but not with 30S subunits that are part of 70S ribosomes or polysomes). Required for efficient processing of 16S rRNA. May interact with the 5'-terminal helix region of 16S rRNA. The protein is Ribosome-binding factor A of Shewanella sp. (strain MR-4).